A 103-amino-acid chain; its full sequence is Large ribosomal subunit protein bL21 (103 aa).

Belongs to the bacterial ribosomal protein bL21 family. Part of the 50S ribosomal subunit. Contacts protein L20.

Functionally, this protein binds to 23S rRNA in the presence of protein L20. The polypeptide is Large ribosomal subunit protein bL21 (Acidovorax sp. (strain JS42)).